A 356-amino-acid polypeptide reads, in one-letter code: Phenylalanine dehydrogenase (356 aa).

NAD(+) is bound at residue R43. An L-phenylalanine-binding site is contributed by K67. The Proton donor/acceptor role is filled by K79. 118–119 provides a ligand contact to L-phenylalanine; sequence PD. NAD(+)-binding positions include D119, S150, T154, 183–189, 206–207, R211, 240–241, and 261–263; these read GLGAVGG, DT, AM, and AAN. L-phenylalanine is bound at residue N263.

It belongs to the Glu/Leu/Phe/Val dehydrogenases family. Homotetramer, dimer of dimers.

It catalyses the reaction L-phenylalanine + NAD(+) + H2O = 3-phenylpyruvate + NH4(+) + NADH + H(+). It functions in the pathway amino-acid biosynthesis; L-phenylalanine biosynthesis; L-phenylalanine from phenylpyruvate (PDH route): step 1/1. Its activity is regulated as follows. Subject to competitive inhibition by 3-phenylpropionate for the conversion of L-phenylalanine to phenylpyruvate. Subject to competitive inhibition by D-phenylalanine for the conversion of phenylpyruvate to L-phenylalanine. Catalyzes the reversible NAD(+)-dependent oxidative deamination of L-phenylalanine to phenylpyruvate. The chain is Phenylalanine dehydrogenase from Rhodococcus sp.